Reading from the N-terminus, the 320-residue chain is Lipoyl synthase (320 aa).

7 residues coordinate [4Fe-4S] cluster: Cys67, Cys72, Cys78, Cys93, Cys97, Cys100, and Ser307. In terms of domain architecture, Radical SAM core spans Phe79–Glu296.

This sequence belongs to the radical SAM superfamily. Lipoyl synthase family. The cofactor is [4Fe-4S] cluster.

It localises to the cytoplasm. It catalyses the reaction [[Fe-S] cluster scaffold protein carrying a second [4Fe-4S](2+) cluster] + N(6)-octanoyl-L-lysyl-[protein] + 2 oxidized [2Fe-2S]-[ferredoxin] + 2 S-adenosyl-L-methionine + 4 H(+) = [[Fe-S] cluster scaffold protein] + N(6)-[(R)-dihydrolipoyl]-L-lysyl-[protein] + 4 Fe(3+) + 2 hydrogen sulfide + 2 5'-deoxyadenosine + 2 L-methionine + 2 reduced [2Fe-2S]-[ferredoxin]. It functions in the pathway protein modification; protein lipoylation via endogenous pathway; protein N(6)-(lipoyl)lysine from octanoyl-[acyl-carrier-protein]: step 2/2. Functionally, catalyzes the radical-mediated insertion of two sulfur atoms into the C-6 and C-8 positions of the octanoyl moiety bound to the lipoyl domains of lipoate-dependent enzymes, thereby converting the octanoylated domains into lipoylated derivatives. This Haemophilus influenzae (strain 86-028NP) protein is Lipoyl synthase.